The chain runs to 1447 residues: Gag-Pol polyprotein (1447 aa).

A lipid anchor (N-myristoyl glycine; by host) is attached at Gly-2. An interaction with Gp41 region spans residues 7 to 31 (VLSGGELDRWEKIRLRPGGKKKYKL). The interaction with host CALM1 stretch occupies residues 8 to 43 (LSGGELDRWEKIRLRPGGKKKYKLKHIVWASRELER). The tract at residues 12-19 (ELDRWEKI) is interaction with host AP3D1. The interaction with membrane phosphatidylinositol 4,5-bisphosphate and RNA stretch occupies residues 14-33 (DRWEKIRLRPGGKKKYKLKH). The Nuclear export signal motif lies at 16-22 (WEKIRLR). The short motif at 26–32 (KKKYKLK) is the Nuclear localization signal element. The segment at 73-77 (EELRS) is interaction with membrane phosphatidylinositol 4,5-bisphosphate. The tract at residues 106-128 (EEQNKSKKKAQQAAADTGHSSQV) is disordered. The residue at position 132 (Tyr-132) is a Phosphotyrosine; by host. The interaction with human PPIA/CYPA and NUP153 stretch occupies residues 189–227 (NTVGGHQAAMQMLKETINEEAAEWDRVHPVHAGPIAPGQ). Positions 277–363 (YSPTSILDIR…GGPGHKARVL (87 aa)) are dimerization/Multimerization of capsid protein p24. At Arg-387 the chain carries Asymmetric dimethylarginine; in Nucleocapsid protein p7; by host PRMT6. The CCHC-type 1 zinc finger occupies 390–407 (VKCFNCGKEGHTARNCRA). At Arg-409 the chain carries Asymmetric dimethylarginine; in Nucleocapsid protein p7; by host PRMT6. Residues 411-428 (KGCWKCGKEGHQMKDCTE) form a CCHC-type 2 zinc finger. The tract at residues 446-493 (REFSSEQTRANSPTISSEQTRANSPTRRELQVWGRDNNSPSEAGADRQ) is disordered. Polar residues predominate over residues 450–470 (SEQTRANSPTISSEQTRANSP). Residues 501–505 (PQITL) form a dimerization of protease region. Residues 520–589 (KEALLDTGAD…TPVNIIGRNL (70 aa)) form the Peptidase A2 domain. Asp-525 serves as the catalytic For protease activity; shared with dimeric partner. 2 dimerization of protease regions span residues 549–555 (GIGGFIK) and 588–600 (NLLTQIGCTLNFP). One can recognise a Reverse transcriptase domain in the interval 643–833 (EGKISKIGPE…PPFLWMGYEL (191 aa)). Positions 709, 784, and 785 each coordinate Mg(2+). The RT 'primer grip' stretch occupies residues 826 to 834 (FLWMGYELH). A Tryptophan repeat motif motif is present at residues 997–1013 (WETWWTEYWQATWIPEW). In terms of domain architecture, RNase H type-1 spans 1033-1156 (IVGAETFYVD…VDKLVSAGIR (124 aa)). Residues Asp-1042, Glu-1077, Asp-1097, and Asp-1148 each contribute to the Mg(2+) site. The Integrase-type zinc finger occupies 1162–1203 (DGIDKAQDEHEKYHSNWRAMASDFNLPPVVAKEIVASCDKCQ). Zn(2+)-binding residues include His-1171, His-1175, Cys-1199, and Cys-1202. The 151-residue stretch at 1213–1363 (VDCSPGIWQL…SAGERIVDII (151 aa)) folds into the Integrase catalytic domain. Asp-1223, Asp-1275, and Glu-1311 together coordinate Mg(2+). The integrase-type DNA-binding region spans 1382–1429 (FRVYYRDSRNPLWKGPAKLLWKGEGAVVIQDNSDIKVVPRRKAKIIRD).

Homotrimer; further assembles as hexamers of trimers. Interacts with gp41 (via C-terminus). Interacts with host CALM1; this interaction induces a conformational change in the Matrix protein, triggering exposure of the myristate group. Interacts with host AP3D1; this interaction allows the polyprotein trafficking to multivesicular bodies during virus assembly. Part of the pre-integration complex (PIC) which is composed of viral genome, matrix protein, Vpr and integrase. In terms of assembly, homodimer; the homodimer further multimerizes as homohexamers or homopentamers. Interacts with human PPIA/CYPA; This interaction stabilizes the capsid. Interacts with human NUP153. Interacts with host PDZD8; this interaction stabilizes the capsid. Interacts with monkey TRIM5; this interaction destabilizes the capsid. As to quaternary structure, homodimer, whose active site consists of two apposed aspartic acid residues. Heterodimer of p66 RT and p51 RT (RT p66/p51). Heterodimerization of RT is essential for DNA polymerase activity. The overall folding of the subdomains is similar in p66 RT and p51 RT but the spatial arrangements of the subdomains are dramatically different. In terms of assembly, homotetramer; may further associate as a homohexadecamer. Part of the pre-integration complex (PIC) which is composed of viral genome, matrix protein, Vpr and integrase. Interacts with human SMARCB1/INI1 and human PSIP1/LEDGF isoform 1. Interacts with human KPNA3; this interaction might play a role in nuclear import of the pre-integration complex. Interacts with human NUP153; this interaction might play a role in nuclear import of the pre-integration complex. It depends on Mg(2+) as a cofactor. In terms of processing, specific enzymatic cleavages by the viral protease yield mature proteins. The protease is released by autocatalytic cleavage. The polyprotein is cleaved during and after budding, this process is termed maturation. Proteolytic cleavage of p66 RT removes the RNase H domain to yield the p51 RT subunit. Nucleocapsid protein p7 might be further cleaved after virus entry. Tyrosine phosphorylated presumably in the virion by a host kinase. Phosphorylation is apparently not a major regulator of membrane association. Post-translationally, phosphorylated possibly by host MAPK1; this phosphorylation is necessary for Pin1-mediated virion uncoating. In terms of processing, methylated by host PRMT6, impairing its function by reducing RNA annealing and the initiation of reverse transcription.

Its subcellular location is the host cell membrane. The protein localises to the host endosome. It localises to the host multivesicular body. It is found in the virion membrane. The protein resides in the host nucleus. Its subcellular location is the host cytoplasm. The protein localises to the virion. It carries out the reaction Specific for a P1 residue that is hydrophobic, and P1' variable, but often Pro.. The catalysed reaction is 3'-end directed exonucleolytic cleavage of viral RNA-DNA hybrid.. The enzyme catalyses Endohydrolysis of RNA in RNA/DNA hybrids. Three different cleavage modes: 1. sequence-specific internal cleavage of RNA. Human immunodeficiency virus type 1 and Moloney murine leukemia virus enzymes prefer to cleave the RNA strand one nucleotide away from the RNA-DNA junction. 2. RNA 5'-end directed cleavage 13-19 nucleotides from the RNA end. 3. DNA 3'-end directed cleavage 15-20 nucleotides away from the primer terminus.. It catalyses the reaction DNA(n) + a 2'-deoxyribonucleoside 5'-triphosphate = DNA(n+1) + diphosphate. Its activity is regulated as follows. Protease: The viral protease is inhibited by many synthetic protease inhibitors (PIs), such as amprenavir, atazanavir, indinavir, loprinavir, nelfinavir, ritonavir and saquinavir. Use of protease inhibitors in tritherapy regimens permit more ambitious therapeutic strategies. Reverse transcriptase/ribonuclease H: RT can be inhibited either by nucleoside RT inhibitors (NRTIs) or by non nucleoside RT inhibitors (NNRTIs). NRTIs act as chain terminators, whereas NNRTIs inhibit DNA polymerization by binding a small hydrophobic pocket near the RT active site and inducing an allosteric change in this region. Classical NRTIs are abacavir, adefovir (PMEA), didanosine (ddI), lamivudine (3TC), stavudine (d4T), tenofovir (PMPA), zalcitabine (ddC), and zidovudine (AZT). Classical NNRTIs are atevirdine (BHAP U-87201E), delavirdine, efavirenz (DMP-266), emivirine (I-EBU), and nevirapine (BI-RG-587). The tritherapies used as a basic effective treatment of AIDS associate two NRTIs and one NNRTI. Functionally, mediates, with Gag polyprotein, the essential events in virion assembly, including binding the plasma membrane, making the protein-protein interactions necessary to create spherical particles, recruiting the viral Env proteins, and packaging the genomic RNA via direct interactions with the RNA packaging sequence (Psi). Gag-Pol polyprotein may regulate its own translation, by the binding genomic RNA in the 5'-UTR. At low concentration, the polyprotein would promote translation, whereas at high concentration, the polyprotein would encapsidate genomic RNA and then shut off translation. Its function is as follows. Targets the polyprotein to the plasma membrane via a multipartite membrane-binding signal, that includes its myristoylated N-terminus. Matrix protein is part of the pre-integration complex. Implicated in the release from host cell mediated by Vpu. Binds to RNA. In terms of biological role, forms the conical core that encapsulates the genomic RNA-nucleocapsid complex in the virion. Most core are conical, with only 7% tubular. The core is constituted by capsid protein hexamer subunits. The core is disassembled soon after virion entry. Host restriction factors such as TRIM5-alpha or TRIMCyp bind retroviral capsids and cause premature capsid disassembly, leading to blocks in reverse transcription. Capsid restriction by TRIM5 is one of the factors which restricts HIV-1 to the human species. Host PIN1 apparently facilitates the virion uncoating. On the other hand, interactions with PDZD8 or CYPA stabilize the capsid. Encapsulates and protects viral dimeric unspliced genomic RNA (gRNA). Binds these RNAs through its zinc fingers. Acts as a nucleic acid chaperone which is involved in rearangement of nucleic acid secondary structure during gRNA retrotranscription. Also facilitates template switch leading to recombination. As part of the polyprotein, participates in gRNA dimerization, packaging, tRNA incorporation and virion assembly. Functionally, aspartyl protease that mediates proteolytic cleavages of Gag and Gag-Pol polyproteins during or shortly after the release of the virion from the plasma membrane. Cleavages take place as an ordered, step-wise cascade to yield mature proteins. This process is called maturation. Displays maximal activity during the budding process just prior to particle release from the cell. Also cleaves Nef and Vif, probably concomitantly with viral structural proteins on maturation of virus particles. Hydrolyzes host EIF4GI and PABP1 in order to shut off the capped cellular mRNA translation. The resulting inhibition of cellular protein synthesis serves to ensure maximal viral gene expression and to evade host immune response. Also mediates cleavage of host YTHDF3. Mediates cleavage of host CARD8, thereby activating the CARD8 inflammasome, leading to the clearance of latent HIV-1 in patient CD4(+) T-cells after viral reactivation; in contrast, HIV-1 can evade CARD8-sensing when its protease remains inactive in infected cells prior to viral budding. Its function is as follows. Multifunctional enzyme that converts the viral RNA genome into dsDNA in the cytoplasm, shortly after virus entry into the cell. This enzyme displays a DNA polymerase activity that can copy either DNA or RNA templates, and a ribonuclease H (RNase H) activity that cleaves the RNA strand of RNA-DNA heteroduplexes in a partially processive 3' to 5' endonucleasic mode. Conversion of viral genomic RNA into dsDNA requires many steps. A tRNA(3)-Lys binds to the primer-binding site (PBS) situated at the 5'-end of the viral RNA. RT uses the 3' end of the tRNA primer to perform a short round of RNA-dependent minus-strand DNA synthesis. The reading proceeds through the U5 region and ends after the repeated (R) region which is present at both ends of viral RNA. The portion of the RNA-DNA heteroduplex is digested by the RNase H, resulting in a ssDNA product attached to the tRNA primer. This ssDNA/tRNA hybridizes with the identical R region situated at the 3' end of viral RNA. This template exchange, known as minus-strand DNA strong stop transfer, can be either intra- or intermolecular. RT uses the 3' end of this newly synthesized short ssDNA to perform the RNA-dependent minus-strand DNA synthesis of the whole template. RNase H digests the RNA template except for two polypurine tracts (PPTs) situated at the 5'-end and near the center of the genome. It is not clear if both polymerase and RNase H activities are simultaneous. RNase H probably can proceed both in a polymerase-dependent (RNA cut into small fragments by the same RT performing DNA synthesis) and a polymerase-independent mode (cleavage of remaining RNA fragments by free RTs). Secondly, RT performs DNA-directed plus-strand DNA synthesis using the PPTs that have not been removed by RNase H as primers. PPTs and tRNA primers are then removed by RNase H. The 3' and 5' ssDNA PBS regions hybridize to form a circular dsDNA intermediate. Strand displacement synthesis by RT to the PBS and PPT ends produces a blunt ended, linear dsDNA copy of the viral genome that includes long terminal repeats (LTRs) at both ends. In terms of biological role, catalyzes viral DNA integration into the host chromosome, by performing a series of DNA cutting and joining reactions. This enzyme activity takes place after virion entry into a cell and reverse transcription of the RNA genome in dsDNA. The first step in the integration process is 3' processing. This step requires a complex comprising the viral genome, matrix protein, Vpr and integrase. This complex is called the pre-integration complex (PIC). The integrase protein removes 2 nucleotides from each 3' end of the viral DNA, leaving recessed CA OH's at the 3' ends. In the second step, the PIC enters cell nucleus. This process is mediated through integrase and Vpr proteins, and allows the virus to infect a non dividing cell. This ability to enter the nucleus is specific of lentiviruses, other retroviruses cannot and rely on cell division to access cell chromosomes. In the third step, termed strand transfer, the integrase protein joins the previously processed 3' ends to the 5' ends of strands of target cellular DNA at the site of integration. The 5'-ends are produced by integrase-catalyzed staggered cuts, 5 bp apart. A Y-shaped, gapped, recombination intermediate results, with the 5'-ends of the viral DNA strands and the 3' ends of target DNA strands remaining unjoined, flanking a gap of 5 bp. The last step is viral DNA integration into host chromosome. This involves host DNA repair synthesis in which the 5 bp gaps between the unjoined strands are filled in and then ligated. Since this process occurs at both cuts flanking the HIV genome, a 5 bp duplication of host DNA is produced at the ends of HIV-1 integration. Alternatively, Integrase may catalyze the excision of viral DNA just after strand transfer, this is termed disintegration. This is Gag-Pol polyprotein (gag-pol) from Human immunodeficiency virus type 1 group M subtype B (isolate BH10) (HIV-1).